The sequence spans 161 residues: MSRPLGFIGYEFGDDEMFVQQMIEKKSNAEQAKMLEQQKKMLECTETMPEESEPVPMKCLDFEEAFQSESVSKGYESPYKNISFLKEDAVTVNTMSHCPADDIAKLIRNIQNSVYTLGIEEARQCRRGKLLNVLKPTGSASPRYLQPTPPKNVAEETTGSQ.

Positions 137–161 (TGSASPRYLQPTPPKNVAEETTGSQ) are disordered.

This sequence belongs to the lin-52 family. In terms of assembly, component of the DRM complex, at least composed of lin-9, lin-35, lin-37, lin-52, lin-53, lin-54- dpl-1 and efl-1. Interacts with zft-11; the interaction is required to suppress the activation of non-neuronal genes in neurons.

The protein resides in the nucleus. Its function is as follows. Synthetic multivulva class B (synMuvB) protein. SynMuvB proteins are required to repress the induction of vulval development by Ras signaling and probably act by forming the multiprotein DRM complex that represses transcription. In association with the zinc finger protein ztf-11, negatively regulates the expression of non-neuronal genes during neurogenesis. This is Protein lin-52 from Caenorhabditis elegans.